Reading from the N-terminus, the 39-residue chain is Photosystem II reaction center protein L (39 aa).

A helical membrane pass occupies residues 18–38 (ILYWGLLLIFVLAVLFSNYFF).

It belongs to the PsbL family. In terms of assembly, PSII is composed of 1 copy each of membrane proteins PsbA, PsbB, PsbC, PsbD, PsbE, PsbF, PsbH, PsbI, PsbJ, PsbK, PsbL, PsbM, PsbT, PsbX, PsbY, PsbZ, Psb30/Ycf12, at least 3 peripheral proteins of the oxygen-evolving complex and a large number of cofactors. It forms dimeric complexes.

It is found in the plastid membrane. One of the components of the core complex of photosystem II (PSII). PSII is a light-driven water:plastoquinone oxidoreductase that uses light energy to abstract electrons from H(2)O, generating O(2) and a proton gradient subsequently used for ATP formation. It consists of a core antenna complex that captures photons, and an electron transfer chain that converts photonic excitation into a charge separation. This subunit is found at the monomer-monomer interface and is required for correct PSII assembly and/or dimerization. The chain is Photosystem II reaction center protein L from Cuscuta pentagona (Five-angled dodder).